A 325-amino-acid polypeptide reads, in one-letter code: MIVVGIDHGTSGITACLMENKTVKSIFKMKRTEINENSFLKELEKHVNLQDIDLMGVCYSMGDGIDKITDINKVENRGVINLEGIGKKVGGGTRVYDEIKSSNIPAIVIPGLHKGVKSMDERFNTLFSHIASPEKISICYNAYKTFGFENFILSDISSNTVTLLIKNGKIFGGFDACVGAVGILHGPLDLELIRNIDSKKITANEAFSKAGVVKVTDSYKGVENTKFEIMSNYKNDKKCKLAVDSLVLSVSMEINSLMFLTPEKNVILAGSIGTWKNPNVSEMIKENIDGNVLVLNGESGAIGSAMIAEDILNGKKEILGISVDF.

The protein belongs to the UPF0285 family.

This chain is UPF0285 protein MmarC6_0247, found in Methanococcus maripaludis (strain C6 / ATCC BAA-1332).